The primary structure comprises 495 residues: Cytoplasmic alpha-amylase (495 aa).

Asparagine 104 and aspartate 198 together coordinate Ca(2+). Residue aspartate 235 is the Nucleophile of the active site. Ca(2+) is bound at residue histidine 239. Glutamate 265 functions as the Proton donor in the catalytic mechanism.

The protein belongs to the glycosyl hydrolase 13 family. As to quaternary structure, monomer. Ca(2+) serves as cofactor.

Its subcellular location is the cytoplasm. It catalyses the reaction Endohydrolysis of (1-&gt;4)-alpha-D-glucosidic linkages in polysaccharides containing three or more (1-&gt;4)-alpha-linked D-glucose units.. The protein is Cytoplasmic alpha-amylase (amyA) of Escherichia coli (strain K12).